Consider the following 429-residue polypeptide: Enolase (429 aa).

Q168 lines the (2R)-2-phosphoglycerate pocket. The Proton donor role is filled by E210. Mg(2+)-binding residues include D247, E288, and D315. (2R)-2-phosphoglycerate-binding residues include K340, R369, S370, and K391. The Proton acceptor role is filled by K340.

The protein belongs to the enolase family. It depends on Mg(2+) as a cofactor.

The protein resides in the cytoplasm. Its subcellular location is the secreted. The protein localises to the cell surface. The enzyme catalyses (2R)-2-phosphoglycerate = phosphoenolpyruvate + H2O. Its pathway is carbohydrate degradation; glycolysis; pyruvate from D-glyceraldehyde 3-phosphate: step 4/5. Catalyzes the reversible conversion of 2-phosphoglycerate (2-PG) into phosphoenolpyruvate (PEP). It is essential for the degradation of carbohydrates via glycolysis. This Nostoc sp. (strain PCC 7120 / SAG 25.82 / UTEX 2576) protein is Enolase.